Consider the following 447-residue polypeptide: Putative branched-chain amino acid carrier protein SH1502 (447 aa).

13 consecutive transmembrane segments (helical) span residues 6 to 26 (WIVG…IFPP), 40 to 60 (VIAF…VGAL), 74 to 94 (PKFS…LFAI), 116 to 136 (LVLF…CINP), 143 to 163 (IGSL…IKGF), 193 to 213 (GYLT…VNAI), 229 to 249 (VMSG…LGFI), 270 to 287 (VGAY…GVFG), 290 to 310 (LLGI…IVSV), 328 to 348 (IFFT…VISM), 350 to 370 (VPVL…ILLA), 382 to 402 (IPIA…NGWV), and 417 to 437 (LEWF…AKFV).

Belongs to the branched chain amino acid transporter family.

It is found in the cell membrane. Its function is as follows. Component of the transport system for branched-chain amino acids (leucine, isoleucine and valine), which is coupled to a proton motive force. The sequence is that of Putative branched-chain amino acid carrier protein SH1502 from Staphylococcus haemolyticus (strain JCSC1435).